We begin with the raw amino-acid sequence, 565 residues long: Urocanate hydratase (565 aa).

NAD(+) contacts are provided by residues 61–62, Gln139, 185–187, Glu205, Arg210, 251–252, 272–276, 282–283, and Tyr331; these read GG, GMG, NA, QTSAH, and YL. Cys419 is an active-site residue. The segment at 453 to 472 is disordered; it reads LDSGSVSSPNRETESMKDGS. Over residues 463 to 472 the composition is skewed to basic and acidic residues; the sequence is RETESMKDGS. Gly501 is an NAD(+) binding site.

The protein belongs to the urocanase family. The cofactor is NAD(+).

The protein localises to the cytoplasm. It carries out the reaction 4-imidazolone-5-propanoate = trans-urocanate + H2O. It functions in the pathway amino-acid degradation; L-histidine degradation into L-glutamate; N-formimidoyl-L-glutamate from L-histidine: step 2/3. Functionally, catalyzes the conversion of urocanate to 4-imidazolone-5-propionate. This chain is Urocanate hydratase, found in Pseudomonas syringae.